We begin with the raw amino-acid sequence, 426 residues long: Gamma-glutamyl phosphate reductase (426 aa).

It belongs to the gamma-glutamyl phosphate reductase family.

Its subcellular location is the cytoplasm. It carries out the reaction L-glutamate 5-semialdehyde + phosphate + NADP(+) = L-glutamyl 5-phosphate + NADPH + H(+). Its pathway is amino-acid biosynthesis; L-proline biosynthesis; L-glutamate 5-semialdehyde from L-glutamate: step 2/2. Functionally, catalyzes the NADPH-dependent reduction of L-glutamate 5-phosphate into L-glutamate 5-semialdehyde and phosphate. The product spontaneously undergoes cyclization to form 1-pyrroline-5-carboxylate. This Acidovorax ebreus (strain TPSY) (Diaphorobacter sp. (strain TPSY)) protein is Gamma-glutamyl phosphate reductase.